The sequence spans 299 residues: tRNA dimethylallyltransferase (299 aa).

An ATP-binding site is contributed by 8-15 (GPTASGKT). Substrate is bound at residue 10 to 15 (TASGKT). The segment at 33–36 (DSQQ) is interaction with substrate tRNA.

Belongs to the IPP transferase family. In terms of assembly, monomer. It depends on Mg(2+) as a cofactor.

The catalysed reaction is adenosine(37) in tRNA + dimethylallyl diphosphate = N(6)-dimethylallyladenosine(37) in tRNA + diphosphate. Its function is as follows. Catalyzes the transfer of a dimethylallyl group onto the adenine at position 37 in tRNAs that read codons beginning with uridine, leading to the formation of N6-(dimethylallyl)adenosine (i(6)A). The chain is tRNA dimethylallyltransferase from Anaeromyxobacter dehalogenans (strain 2CP-C).